The primary structure comprises 288 residues: Putative movement protein (288 aa).

The disordered stretch occupies residues 207-288 (TGPRATLSQP…TSSRSRRVRG (82 aa)).

In terms of biological role, transports viral genome to neighboring plant cells directly through plasmosdesmata, without any budding. The movement protein allows efficient cell to cell propagation, by bypassing the host cell wall barrier (Potential). This is Putative movement protein from Cucumis melo (Muskmelon).